We begin with the raw amino-acid sequence, 119 residues long: Large ribosomal subunit protein bL20 (119 aa).

This sequence belongs to the bacterial ribosomal protein bL20 family.

Functionally, binds directly to 23S ribosomal RNA and is necessary for the in vitro assembly process of the 50S ribosomal subunit. It is not involved in the protein synthesizing functions of that subunit. This is Large ribosomal subunit protein bL20 from Aromatoleum aromaticum (strain DSM 19018 / LMG 30748 / EbN1) (Azoarcus sp. (strain EbN1)).